The sequence spans 399 residues: Formate-dependent phosphoribosylglycinamide formyltransferase (399 aa).

Residues 22-23 (EL) and glutamate 82 each bind N(1)-(5-phospho-beta-D-ribosyl)glycinamide. Residues arginine 114, lysine 155, 160–165 (SSGKGQ), 195–198 (EKMI), and glutamate 203 contribute to the ATP site. The ATP-grasp domain maps to 119-308 (RLAAETLHLL…EFALHVRAFL (190 aa)). Residues glutamate 267 and glutamate 279 each coordinate Mg(2+). N(1)-(5-phospho-beta-D-ribosyl)glycinamide contacts are provided by residues aspartate 286, lysine 355, and 362 to 363 (RR).

It belongs to the PurK/PurT family. In terms of assembly, homodimer.

The catalysed reaction is N(1)-(5-phospho-beta-D-ribosyl)glycinamide + formate + ATP = N(2)-formyl-N(1)-(5-phospho-beta-D-ribosyl)glycinamide + ADP + phosphate + H(+). Its pathway is purine metabolism; IMP biosynthesis via de novo pathway; N(2)-formyl-N(1)-(5-phospho-D-ribosyl)glycinamide from N(1)-(5-phospho-D-ribosyl)glycinamide (formate route): step 1/1. Its function is as follows. Involved in the de novo purine biosynthesis. Catalyzes the transfer of formate to 5-phospho-ribosyl-glycinamide (GAR), producing 5-phospho-ribosyl-N-formylglycinamide (FGAR). Formate is provided by PurU via hydrolysis of 10-formyl-tetrahydrofolate. This is Formate-dependent phosphoribosylglycinamide formyltransferase from Proteus mirabilis (strain HI4320).